A 439-amino-acid polypeptide reads, in one-letter code: Homogentisate 1,2-dioxygenase (439 aa).

Fe cation is bound by residues histidine 335, glutamate 341, and histidine 371.

It belongs to the homogentisate dioxygenase family. Fe cation serves as cofactor.

It catalyses the reaction homogentisate + O2 = 4-maleylacetoacetate + H(+). It participates in amino-acid degradation; L-phenylalanine degradation; acetoacetate and fumarate from L-phenylalanine: step 4/6. This is Homogentisate 1,2-dioxygenase from Drosophila melanogaster (Fruit fly).